A 202-amino-acid chain; its full sequence is MSESLEELAAYLKSKLGDKLEETVLAFGELTIVSRLDAITDVLIFVRDDSRCQFINITDISGVDYPCRDKRFDVSYQLLSPRHNLRLRVKVRTDENIPVASACSIYPGAEWYERETYDMYGILFSGHPDLRRILTDYGFEGHPLRKDFPVTGFVECRYDNEAKRVIYEPVVLRQEMRNFDFLSPWEGAQYILPCDEKTKDKR.

It belongs to the complex I 30 kDa subunit family. In terms of assembly, NDH-1 is composed of 14 different subunits. Subunits NuoB, C, D, E, F, and G constitute the peripheral sector of the complex.

Its subcellular location is the cell inner membrane. It carries out the reaction a quinone + NADH + 5 H(+)(in) = a quinol + NAD(+) + 4 H(+)(out). Its function is as follows. NDH-1 shuttles electrons from NADH, via FMN and iron-sulfur (Fe-S) centers, to quinones in the respiratory chain. The immediate electron acceptor for the enzyme in this species is believed to be ubiquinone. Couples the redox reaction to proton translocation (for every two electrons transferred, four hydrogen ions are translocated across the cytoplasmic membrane), and thus conserves the redox energy in a proton gradient. The protein is NADH-quinone oxidoreductase subunit C of Bartonella henselae (strain ATCC 49882 / DSM 28221 / CCUG 30454 / Houston 1) (Rochalimaea henselae).